The chain runs to 428 residues: UPF0597 protein BF3772 (428 aa).

The protein belongs to the UPF0597 family.

In Bacteroides fragilis (strain YCH46), this protein is UPF0597 protein BF3772.